Here is a 458-residue protein sequence, read N- to C-terminus: Ig mu chain C region secreted form (458 aa).

The tract at residues 1–106 is CH1; sequence VSLSSPTLYP…SNRDLRVSFP (106 aa). A disulfide bridge connects residues Cys28 and Cys90. N-linked (GlcNAc...) asparagine glycans are attached at residues Asn46 and Asn114. The interval 107–222 is CH2; sequence VDSELPPNVS…VSMSSECSTT (116 aa). An intrachain disulfide couples Cys137 to Cys200. 4 N-linked (GlcNAc...) asparagine glycosylation sites follow: Asn212, Asn261, Asn277, and Asn284. The CH3 stretch occupies residues 223 to 327; the sequence is PSPGIQVFPI…PLKHTISKSR (105 aa). 2 cysteine pairs are disulfide-bonded: Cys249-Cys308 and Cys356-Cys418. The CH4 stretch occupies residues 328–458; the sequence is EVAKHPPAVY…IMSDTASTCY (131 aa). N-linked (GlcNAc...) asparagine glycosylation occurs at Asn445.

It localises to the secreted. The polypeptide is Ig mu chain C region secreted form (Oryctolagus cuniculus (Rabbit)).